Here is a 362-residue protein sequence, read N- to C-terminus: Phosphoserine aminotransferase (362 aa).

L-glutamate contacts are provided by Ser9 and Arg42. Pyridoxal 5'-phosphate is bound by residues 76 to 77 (GR), Trp102, Thr153, Asp174, and Gln197. At Lys198 the chain carries N6-(pyridoxal phosphate)lysine. A pyridoxal 5'-phosphate-binding site is contributed by 239–240 (NT).

Belongs to the class-V pyridoxal-phosphate-dependent aminotransferase family. SerC subfamily. In terms of assembly, homodimer. Pyridoxal 5'-phosphate serves as cofactor.

It is found in the cytoplasm. It catalyses the reaction O-phospho-L-serine + 2-oxoglutarate = 3-phosphooxypyruvate + L-glutamate. The enzyme catalyses 4-(phosphooxy)-L-threonine + 2-oxoglutarate = (R)-3-hydroxy-2-oxo-4-phosphooxybutanoate + L-glutamate. The protein operates within amino-acid biosynthesis; L-serine biosynthesis; L-serine from 3-phospho-D-glycerate: step 2/3. Its pathway is cofactor biosynthesis; pyridoxine 5'-phosphate biosynthesis; pyridoxine 5'-phosphate from D-erythrose 4-phosphate: step 3/5. Its function is as follows. Catalyzes the reversible conversion of 3-phosphohydroxypyruvate to phosphoserine and of 3-hydroxy-2-oxo-4-phosphonooxybutanoate to phosphohydroxythreonine. This Salmonella arizonae (strain ATCC BAA-731 / CDC346-86 / RSK2980) protein is Phosphoserine aminotransferase.